The following is a 362-amino-acid chain: Protein RecA (362 aa).

77 to 84 (GPESSGKT) contributes to the ATP binding site.

The protein belongs to the RecA family.

The protein localises to the cytoplasm. In terms of biological role, can catalyze the hydrolysis of ATP in the presence of single-stranded DNA, the ATP-dependent uptake of single-stranded DNA by duplex DNA, and the ATP-dependent hybridization of homologous single-stranded DNAs. It interacts with LexA causing its activation and leading to its autocatalytic cleavage. The protein is Protein RecA of Rhizobium etli (strain CIAT 652).